The sequence spans 204 residues: Thymidylate kinase (204 aa).

11–18 (GLDKSGKT) contributes to the ATP binding site.

The protein belongs to the thymidylate kinase family.

The catalysed reaction is dTMP + ATP = dTDP + ADP. It participates in pyrimidine metabolism; dTTP biosynthesis. This Bos taurus (Bovine) protein is Thymidylate kinase (TMK).